Reading from the N-terminus, the 320-residue chain is NAD-dependent protein deacylase SIR2rp2 (320 aa).

The transit peptide at 1-22 directs the protein to the mitochondrion; that stretch reads MRPAGTLASFLERCSARKRGRG. Residues 23–320 enclose the Deacetylase sirtuin-type domain; the sequence is CVVLTGAGCS…MFFRRKTIQL (298 aa). NAD(+) is bound by residues 28 to 48 and 108 to 111; these read GAGCSTESGIPDYRGPNGQYH and QNVD. H144 functions as the Proton acceptor in the catalytic mechanism. Residues C152, C155, C207, and C210 each coordinate Zn(2+). NAD(+)-binding positions include 248 to 250, 274 to 276, and G294; these read GTS and NAG.

Belongs to the sirtuin family. Class II subfamily. It depends on Zn(2+) as a cofactor.

The protein localises to the mitochondrion matrix. It catalyses the reaction N(6)-acetyl-L-lysyl-[protein] + NAD(+) + H2O = 2''-O-acetyl-ADP-D-ribose + nicotinamide + L-lysyl-[protein]. Functionally, NAD-dependent protein deacylase. Catalyzes the NAD-dependent hydrolysis of acyl groups from lysine residues. The protein is NAD-dependent protein deacylase SIR2rp2 (SIR2rp2) of Leishmania major.